A 331-amino-acid polypeptide reads, in one-letter code: 4-hydroxy-3-methylbut-2-enyl diphosphate reductase (331 aa).

Cys12 is a binding site for [4Fe-4S] cluster. Residues His43 and His81 each coordinate (2E)-4-hydroxy-3-methylbut-2-enyl diphosphate. His43 and His81 together coordinate dimethylallyl diphosphate. Positions 43 and 81 each coordinate isopentenyl diphosphate. Cys103 is a binding site for [4Fe-4S] cluster. Residue His131 participates in (2E)-4-hydroxy-3-methylbut-2-enyl diphosphate binding. His131 serves as a coordination point for dimethylallyl diphosphate. Residue His131 coordinates isopentenyl diphosphate. Catalysis depends on Glu133, which acts as the Proton donor. Thr170 contributes to the (2E)-4-hydroxy-3-methylbut-2-enyl diphosphate binding site. Position 198 (Cys198) interacts with [4Fe-4S] cluster. Ser226, Asn228, and Ser271 together coordinate (2E)-4-hydroxy-3-methylbut-2-enyl diphosphate. Dimethylallyl diphosphate is bound by residues Ser226, Asn228, and Ser271. Isopentenyl diphosphate-binding residues include Ser226, Asn228, and Ser271.

It belongs to the IspH family. [4Fe-4S] cluster is required as a cofactor.

The catalysed reaction is isopentenyl diphosphate + 2 oxidized [2Fe-2S]-[ferredoxin] + H2O = (2E)-4-hydroxy-3-methylbut-2-enyl diphosphate + 2 reduced [2Fe-2S]-[ferredoxin] + 2 H(+). It catalyses the reaction dimethylallyl diphosphate + 2 oxidized [2Fe-2S]-[ferredoxin] + H2O = (2E)-4-hydroxy-3-methylbut-2-enyl diphosphate + 2 reduced [2Fe-2S]-[ferredoxin] + 2 H(+). The protein operates within isoprenoid biosynthesis; dimethylallyl diphosphate biosynthesis; dimethylallyl diphosphate from (2E)-4-hydroxy-3-methylbutenyl diphosphate: step 1/1. Its pathway is isoprenoid biosynthesis; isopentenyl diphosphate biosynthesis via DXP pathway; isopentenyl diphosphate from 1-deoxy-D-xylulose 5-phosphate: step 6/6. Catalyzes the conversion of 1-hydroxy-2-methyl-2-(E)-butenyl 4-diphosphate (HMBPP) into a mixture of isopentenyl diphosphate (IPP) and dimethylallyl diphosphate (DMAPP). Acts in the terminal step of the DOXP/MEP pathway for isoprenoid precursor biosynthesis. The sequence is that of 4-hydroxy-3-methylbut-2-enyl diphosphate reductase from Listeria monocytogenes serotype 4b (strain CLIP80459).